The sequence spans 611 residues: Pleckstrin homology domain-containing family N member 1 (611 aa).

The interval 1–45 (MGNSHCVPQAPRRLRASFSRKPSLKGNREDSARMSAGLPGPEAAR) is disordered. A lipid anchor (N-myristoyl glycine) is attached at glycine 2. The tract at residues 61–100 (TDILDLENQRENLEQPFLSVFKKGRRRVPVRNLGKVVHYA) is interaction with C1QBP. PH domains lie at 96-192 (VVHY…TALL) and 222-319 (AVCA…THRE). Phosphotyrosine is present on tyrosine 302. 3 disordered regions span residues 323-424 (PLPG…PVTP), 438-468 (ESSP…TSHR), and 483-611 (MQSA…VQWI). Residues 341–350 (GSLSSGGQTS) are compositionally biased toward low complexity. Positions 360-391 (STRTSHSLPESSVPSTVGCSSQHTPDQANSDR) are enriched in polar residues. Tyrosine 456 is subject to Phosphotyrosine. The segment covering 498–509 (VPVSVPASDPRS) has biased composition (low complexity). Position 559 is a phosphoserine (serine 559). The segment covering 570-585 (RSPRRSRDPGYDHLWD) has biased composition (basic and acidic residues).

As to quaternary structure, found in a complex with cytochrome c mRNA and various ribosomal proteins. Interacts with C1QBP. Interacts with ELAVL1. Interacts with BID. In terms of processing, phosphorylation is essential for its mitochondrial localization and regulates its interaction with C1QBP. Ubiquitous. Epressed in several cancer cell lines of differing origin.

Its subcellular location is the cell membrane. It is found in the mitochondrion. It localises to the mitochondrion membrane. In terms of biological role, controls the stability of the leptin mRNA harboring an AU-rich element (ARE) in its 3' UTR, in cooperation with the RNA stabilizer ELAVL1. Decreases the stability of the leptin mRNA by antagonizing the function of ELAVL1 by inducing its atypical recruitment from the nucleus to the cytosol. Binds to cardiolipin (CL), phosphatidic acid (PA), phosphatidylinositol 4-phosphate (PtdIns(4)P) and phosphatidylserine (PS). Promotes apoptosis by enhancing BAX-BAK hetero-oligomerization via interaction with BID in colon cancer cells. The protein is Pleckstrin homology domain-containing family N member 1 (PLEKHN1) of Homo sapiens (Human).